The following is a 157-amino-acid chain: Protein Smg (157 aa).

It belongs to the Smg family.

This chain is Protein Smg, found in Serratia proteamaculans (strain 568).